The sequence spans 325 residues: Ribonucleoside-diphosphate reductase subunit beta (325 aa).

3 residues coordinate Fe cation: Asp-73, Glu-104, and His-107. Residue Tyr-111 is part of the active site. Fe cation is bound by residues Glu-164, Glu-198, and His-201.

Belongs to the ribonucleoside diphosphate reductase small chain family. Tetramer of two alpha and two beta subunits. Requires Fe cation as cofactor.

It catalyses the reaction a 2'-deoxyribonucleoside 5'-diphosphate + [thioredoxin]-disulfide + H2O = a ribonucleoside 5'-diphosphate + [thioredoxin]-dithiol. Functionally, provides the precursors necessary for DNA synthesis. Catalyzes the biosynthesis of deoxyribonucleotides from the corresponding ribonucleotides. The sequence is that of Ribonucleoside-diphosphate reductase subunit beta (nrdF) from Mycobacterium leprae (strain TN).